Here is a 125-residue protein sequence, read N- to C-terminus: Cystatin-like cysteine protease inhibitor EPIC2B (125 aa).

Residues 1 to 21 (MSFLRPTLALLAVTALVTTSG) form the signal peptide. Asn45 is a glycosylation site (N-linked (GlcNAc...) asparagine). The Secondary area of contact motif lies at 68 to 72 (QVVSG).

Belongs to the cystatin family. In terms of assembly, interacts with the host papain-like cysteine protease PIP1. Interacts with the host papain-like cysteine protease RCR3. Interacts with the host papain-like cysteine protease C14.

The protein resides in the secreted. Secreted effector that interacts with and inhibits the pathogenesis-related papain-like cysteine proteases C14, PIP1 and RCR3 of host plants. Inhibition of host proteases by a pathogen extracellular protease inhibitor forms a specific type of defense-counterdefense mechanism between plants and microbial pathogens. This is Cystatin-like cysteine protease inhibitor EPIC2B from Phytophthora infestans (Potato late blight agent).